We begin with the raw amino-acid sequence, 551 residues long: Membrane protein insertase YidC (551 aa).

A helical membrane pass occupies residues 3 to 23 (ANHIRILLLVTIAIMFISLMG). A compositionally biased stretch (polar residues) spans 33 to 47 (NTKQQTSATQNNSHY). Residues 33 to 59 (NTKQQTSATQNNSHYDNADSSTNTDVT) form a disordered region. The segment covering 50 to 59 (ADSSTNTDVT) has biased composition (low complexity). The next 3 helical transmembrane spans lie at 361-381 (LVGN…LIFY), 431-451 (LSGC…YWVL), and 504-524 (VMMF…SGLV).

Belongs to the OXA1/ALB3/YidC family. Type 1 subfamily. In terms of assembly, interacts with the Sec translocase complex via SecD. Specifically interacts with transmembrane segments of nascent integral membrane proteins during membrane integration.

It is found in the cell inner membrane. Functionally, required for the insertion and/or proper folding and/or complex formation of integral membrane proteins into the membrane. Involved in integration of membrane proteins that insert both dependently and independently of the Sec translocase complex, as well as at least some lipoproteins. Aids folding of multispanning membrane proteins. This chain is Membrane protein insertase YidC, found in Francisella tularensis subsp. tularensis (strain SCHU S4 / Schu 4).